The following is a 530-amino-acid chain: Tetrahydroberberine oxidase (530 aa).

Positions 1–24 (MSKMASSIFATFSLLSSLLPTSLA) are cleaved as a signal peptide. A disulfide bond links Cys36 and Cys94. N-linked (GlcNAc...) asparagine glycosylation is present at Asn51. The region spanning 72 to 246 (TTPKPNFIVT…LAWKIRLVPV (175 aa)) is the FAD-binding PCMH-type domain. The 6-(S-cysteinyl)-8alpha-(pros-histidyl)-FAD (His-Cys) cross-link spans 109-171 (HDFEGLSYVS…GVHAFPAGLC (63 aa)). An N-linked (GlcNAc...) asparagine glycan is attached at Asn483.

This sequence belongs to the oxygen-dependent FAD-linked oxidoreductase family. FAD serves as cofactor. The FAD cofactor is bound via a bicovalent 6-S-cysteinyl, 8alpha-N1-histidyl FAD linkage.

It carries out the reaction (S)-canadine + 2 O2 + H(+) = berberine + 2 H2O2. In terms of biological role, catalyzes the oxidation of different tetrahydroprotoberberines, such as (S)-canadine, (S)-scoulerine and (S)-corypalmine. Catalyzes the oxidation of (S)-coreximine and (S)-tetrahydropalmatine. Catalyzes the oxidation of different 1-benzylisoquinoline alkaloids, such as (S)-norreticuline, (S)-nororientaline, (S)-coclaurine and (S)-norisoorientaline. Exhibits strict specificity for the (S)-enantiomer of tetrahydroprotoberbirines and 1-benzylisoquinoline alkaloids. This chain is Tetrahydroberberine oxidase, found in Berberis wilsoniae (Mrs Wilson's barberry).